A 237-amino-acid polypeptide reads, in one-letter code: Cysteine-rich venom protein DIS2 (237 aa).

Residues 1–18 (MFVFILLSLAAVLQQSFG) form the signal peptide. The 129-residue stretch at 37-165 (VDKHNAFRRS…SYNYFYVCQY (129 aa)) folds into the SCP domain. Intrachain disulfides connect Cys-74–Cys-152, Cys-91–Cys-166, Cys-147–Cys-163, Cys-185–Cys-192, Cys-188–Cys-197, Cys-201–Cys-234, and Cys-219–Cys-232. In terms of domain architecture, ShKT spans 201 to 234 (CSREDVFMNCKSLVAQSNCQDDYIRKNCPATCFC).

Belongs to the CRISP family. As to expression, expressed by the venom gland.

Its subcellular location is the secreted. In terms of biological role, weakly blocks contraction of smooth muscle elicited by high potassium-induced depolarization, but does not block caffeine-stimulated contraction. May target voltage-gated calcium channels on smooth muscle. The chain is Cysteine-rich venom protein DIS2 from Dispholidus typus (Boomslang).